A 416-amino-acid chain; its full sequence is Choline/ethanolaminephosphotransferase 1 (416 aa).

The tract at residues 1-20 is disordered; that stretch reads MSGHRSTRKRCGDSHPESPV. Ser18 carries the post-translational modification Phosphoserine. Residue Thr40 is modified to Phosphothreonine. Asn86 is a binding site for CDP-choline. 2 helical membrane passes run 89–108 and 116–133; these read TIIG…FYCP and LWAY…QSLD. Residue Asp133 participates in Mg(2+) binding. The N-linked (GlcNAc...) asparagine glycan is linked to Asn144. Residue Glu151 coordinates CDP-choline. Asp154 lines the Mg(2+) pocket. His155 acts as the Proton acceptor in catalysis. The next 8 membrane-spanning stretches (helical) occupy residues 156 to 176, 180 to 199, 210 to 230, 246 to 267, 286 to 306, 315 to 334, 349 to 363, and 368 to 388; these read GCDS…VQLG, DWMF…AHWQ, IIDV…AVIG, MKLF…NYFR, VLSP…IYKK, HPCL…TNKL, TAFI…DQYF, and DEYI…IRYC. Asp158 provides a ligand contact to Mg(2+).

Belongs to the CDP-alcohol phosphatidyltransferase class-I family. As to quaternary structure, homodimer. It depends on Mg(2+) as a cofactor. The cofactor is Mn(2+).

It localises to the endoplasmic reticulum membrane. It is found in the nucleus membrane. It carries out the reaction CDP-ethanolamine + a 1,2-diacyl-sn-glycerol = a 1,2-diacyl-sn-glycero-3-phosphoethanolamine + CMP + H(+). It catalyses the reaction CDP-choline + a 1,2-diacyl-sn-glycerol = a 1,2-diacyl-sn-glycero-3-phosphocholine + CMP + H(+). The enzyme catalyses 1-O-alkyl-2-acyl-sn-glycerol + CDP-choline = a 1-O-alkyl-2-acyl-sn-glycero-3-phosphocholine + CMP + H(+). The catalysed reaction is a 1-O-(1Z-alkenyl)-2-acyl-sn-glycerol + CDP-choline = a 1-O-(1Z-alkenyl)-2-acyl-sn-glycero-3-phosphocholine + CMP + H(+). It carries out the reaction 1,2-dioctanoyl-sn-glycerol + CDP-choline = 1,2-dioctanoyl-sn-glycero-3-phosphocholine + CMP + H(+). It catalyses the reaction 1,2-didecanoyl-sn-glycerol + CDP-choline = 1,2-didecanoyl-sn-glycero-3-phosphocholine + CMP + H(+). The enzyme catalyses CDP-choline + 1,2-di-(9Z-octadecenoyl)-sn-glycerol = 1,2-di-(9Z-octadecenoyl)-sn-glycero-3-phosphocholine + CMP + H(+). The catalysed reaction is 1-hexadecanoyl-2-(9Z-octadecenoyl)-sn-glycerol + CDP-choline = 1-hexadecanoyl-2-(9Z-octadecenoyl)-sn-glycero-3-phosphocholine + CMP + H(+). It carries out the reaction CDP-ethanolamine + 1,2-di-(9Z-octadecenoyl)-sn-glycerol = 1,2-di-(9Z-octadecenoyl)-sn-glycero-3-phosphoethanolamine + CMP + H(+). It catalyses the reaction 1-hexadecanoyl-2-(9Z-octadecenoyl)-sn-glycerol + CDP-ethanolamine = 1-hexadecanoyl-2-(9Z-octadecenoyl)-sn-glycero-3-phosphoethanolamine + CMP + H(+). The enzyme catalyses 1-hexadecanoyl-2-(4Z,7Z,10Z,13Z,16Z,19Z-docosahexaenoyl)-sn-glycerol + CDP-choline = 1-hexadecanoyl-2-(4Z,7Z,10Z,13Z,16Z,19Z-docosahexaenoyl)-sn-glycero-3-phosphocholine + CMP + H(+). The catalysed reaction is 1,2-di-(9Z-hexadecenoyl)-sn-glycerol + CDP-choline = 1,2-di-(9Z-hexadecenoyl)-sn-glycero-3-phosphocholine + CMP + H(+). It carries out the reaction 1,2-di-(9Z-hexadecenoyl)-sn-glycerol + CDP-ethanolamine = 1,2-di-(9Z-hexadecenoyl)-sn-glycero-3-phosphoethanolamine + CMP + H(+). It catalyses the reaction 1-O-hexadecyl-2-acetyl-sn-glycerol + CDP-choline = 1-O-hexadecyl-2-acetyl-sn-glycero-3-phosphocholine + CMP + H(+). The enzyme catalyses 1-O-hexadecyl-2-(5Z,8Z,11Z,14Z-eicosatetraenoyl)-sn-glycerol + CDP-choline = 1-O-hexadecyl-2-(5Z,8Z,11Z,14Z)-eicosatetraenoyl-sn-glycero-3-phosphocholine + CMP + H(+). It functions in the pathway phospholipid metabolism; phosphatidylethanolamine biosynthesis; phosphatidylethanolamine from ethanolamine: step 3/3. The protein operates within phospholipid metabolism; phosphatidylcholine biosynthesis; phosphatidylcholine from phosphocholine: step 2/2. In terms of biological role, catalyzes both phosphatidylcholine and phosphatidylethanolamine biosynthesis from CDP-choline and CDP-ethanolamine, respectively. Involved in protein-dependent process of phospholipid transport to distribute phosphatidyl choline to the lumenal surface. Has a higher cholinephosphotransferase activity than ethanolaminephosphotransferase activity. The protein is Choline/ethanolaminephosphotransferase 1 of Rattus norvegicus (Rat).